A 460-amino-acid chain; its full sequence is Fumarate hydratase class II (460 aa).

Residues 95–97 (SGT), 126–129 (HPND), 136–138 (SSN), and T184 contribute to the substrate site. The Proton donor/acceptor role is filled by H185. S315 is a catalytic residue. Substrate-binding positions include S316 and 321 to 323 (KVN).

Belongs to the class-II fumarase/aspartase family. Fumarase subfamily. In terms of assembly, homotetramer.

It is found in the cytoplasm. The enzyme catalyses (S)-malate = fumarate + H2O. Its pathway is carbohydrate metabolism; tricarboxylic acid cycle; (S)-malate from fumarate: step 1/1. Its function is as follows. Involved in the TCA cycle. Catalyzes the stereospecific interconversion of fumarate to L-malate. This Chlamydia pneumoniae (Chlamydophila pneumoniae) protein is Fumarate hydratase class II.